Here is a 239-residue protein sequence, read N- to C-terminus: Lactate utilization protein A 1 (239 aa).

This sequence belongs to the LutA/YkgE family.

Is involved in L-lactate degradation and allows cells to grow with lactate as the sole carbon source. In Bacillus anthracis (strain A0248), this protein is Lactate utilization protein A 1.